The primary structure comprises 638 residues: Chaperone protein HtpG (638 aa).

The interval Met-1–Arg-328 is a; substrate-binding. A b region spans residues Glu-329–Arg-558. A disordered region spans residues Leu-484–Ala-508. The interval Phe-559–Lys-638 is c.

This sequence belongs to the heat shock protein 90 family. Homodimer.

It is found in the cytoplasm. Functionally, molecular chaperone. Has ATPase activity. The sequence is that of Chaperone protein HtpG from Anaplasma marginale (strain St. Maries).